The sequence spans 591 residues: L-fucose isomerase (591 aa).

Catalysis depends on proton acceptor residues E337 and D361. Residues E337, D361, and H528 each coordinate Mn(2+).

The protein belongs to the L-fucose isomerase family. As to quaternary structure, homohexamer. Requires Mn(2+) as cofactor.

It localises to the cytoplasm. The enzyme catalyses L-fucose = L-fuculose. Its pathway is carbohydrate degradation; L-fucose degradation; L-lactaldehyde and glycerone phosphate from L-fucose: step 1/3. Its function is as follows. Converts the aldose L-fucose into the corresponding ketose L-fuculose. This chain is L-fucose isomerase, found in Escherichia coli O6:H1 (strain CFT073 / ATCC 700928 / UPEC).